The primary structure comprises 179 residues: Inosine/xanthosine triphosphatase (179 aa).

Substrate is bound by residues 8–13 and 68–69; these read TTNPAK and EA. Glu68 contributes to the Mg(2+) binding site.

It belongs to the YjjX NTPase family. In terms of assembly, homodimer. Mg(2+) is required as a cofactor. The cofactor is Mn(2+).

It carries out the reaction XTP + H2O = XDP + phosphate + H(+). The enzyme catalyses ITP + H2O = IDP + phosphate + H(+). In terms of biological role, phosphatase that hydrolyzes non-canonical purine nucleotides such as XTP and ITP to their respective diphosphate derivatives. Probably excludes non-canonical purines from DNA/RNA precursor pool, thus preventing their incorporation into DNA/RNA and avoiding chromosomal lesions. The polypeptide is Inosine/xanthosine triphosphatase (Serratia proteamaculans (strain 568)).